Here is a 272-residue protein sequence, read N- to C-terminus: NADPH-dependent 7-cyano-7-deazaguanine reductase (272 aa).

80–82 (VES) contacts substrate. 82–83 (SK) contacts NADPH. Catalysis depends on cysteine 178, which acts as the Thioimide intermediate. The active-site Proton donor is aspartate 185. 217–218 (AE) lines the substrate pocket. 246-247 (RG) is a binding site for NADPH.

This sequence belongs to the GTP cyclohydrolase I family. QueF type 2 subfamily. In terms of assembly, homodimer.

The protein localises to the cytoplasm. It carries out the reaction 7-aminomethyl-7-carbaguanine + 2 NADP(+) = 7-cyano-7-deazaguanine + 2 NADPH + 3 H(+). Its pathway is tRNA modification; tRNA-queuosine biosynthesis. Its function is as follows. Catalyzes the NADPH-dependent reduction of 7-cyano-7-deazaguanine (preQ0) to 7-aminomethyl-7-deazaguanine (preQ1). The protein is NADPH-dependent 7-cyano-7-deazaguanine reductase of Rickettsia typhi (strain ATCC VR-144 / Wilmington).